A 698-amino-acid chain; its full sequence is Elongation factor G (698 aa).

One can recognise a tr-type G domain in the interval 8-290 (ERYRNIGIAA…AVIEFLPAPN (283 aa)). GTP contacts are provided by residues 17–24 (AHIDAGKT), 88–92 (DTPGH), and 142–145 (NKMD).

This sequence belongs to the TRAFAC class translation factor GTPase superfamily. Classic translation factor GTPase family. EF-G/EF-2 subfamily.

It is found in the cytoplasm. In terms of biological role, catalyzes the GTP-dependent ribosomal translocation step during translation elongation. During this step, the ribosome changes from the pre-translocational (PRE) to the post-translocational (POST) state as the newly formed A-site-bound peptidyl-tRNA and P-site-bound deacylated tRNA move to the P and E sites, respectively. Catalyzes the coordinated movement of the two tRNA molecules, the mRNA and conformational changes in the ribosome. This is Elongation factor G from Halorhodospira halophila (strain DSM 244 / SL1) (Ectothiorhodospira halophila (strain DSM 244 / SL1)).